We begin with the raw amino-acid sequence, 251 residues long: MNALELEQILNHKLNSQAISDYAPNGLQVEGKKDIKKIITGVTASQALIEYAVSQNADAILVHHGYFWKSENPCIRGMKGKRIKTLLVNDINLYGYHLPLDVHPELGNNARLAALLEIEDLQPLEQGTVSIPVYGTLKTPLTSDAFAARIEQVLKRKPLVCSDNAPHLIRTVGICTGGGQSYIDLAANQGVDAFISGEVSEQTIHSAREQGIHFFAAGHHATERYGIKALGEWLSQHYDLEVEFKDIDNPA.

A divalent metal cation is bound by residues His63, His64, Asp101, His219, and Glu223.

It belongs to the GTP cyclohydrolase I type 2/NIF3 family. In terms of assembly, homohexamer.

The sequence is that of GTP cyclohydrolase 1 type 2 homolog from Pasteurella multocida (strain Pm70).